We begin with the raw amino-acid sequence, 221 residues long: Response regulator protein PmrA (221 aa).

The 115-residue stretch at 2 to 116 (RILLAEDDLL…ELQARVRALT (115 aa)) folds into the Response regulatory domain. D51 is modified (4-aspartylphosphate). A DNA-binding region (ompR/PhoB-type) is located at residues 124 to 218 (LPQLVHGELR…VRGIGYGIDQ (95 aa)).

It localises to the cytoplasm. Its function is as follows. Member of the two-component regulatory system PmrA/PmrB that plays a role in the regulation of resistance towards polymyxin B and cationic antimicrobial peptides in response to limiting concentrations of Mg(2+). Functions as a transcriptional activator by direct binding to a cis-acting sequence upstream of the target gene promoters including lipase lipA and pmrH promoters. Also autoregulates its own pmrAB operon under Mg(2+)-limiting conditions. The polypeptide is Response regulator protein PmrA (pmrA) (Pseudomonas aeruginosa (strain ATCC 15692 / DSM 22644 / CIP 104116 / JCM 14847 / LMG 12228 / 1C / PRS 101 / PAO1)).